Reading from the N-terminus, the 493-residue chain is Membrane-bound lytic murein transglycosylase F (493 aa).

Residues Met-1–Ala-21 form the signal peptide. Residues Leu-22–Val-268 are non-LT domain. Residues Gly-269 to Pro-493 are LT domain. Glu-313 is a catalytic residue.

The protein in the N-terminal section; belongs to the bacterial solute-binding protein 3 family. In the C-terminal section; belongs to the transglycosylase Slt family.

The protein localises to the cell outer membrane. It carries out the reaction Exolytic cleavage of the (1-&gt;4)-beta-glycosidic linkage between N-acetylmuramic acid (MurNAc) and N-acetylglucosamine (GlcNAc) residues in peptidoglycan, from either the reducing or the non-reducing ends of the peptidoglycan chains, with concomitant formation of a 1,6-anhydrobond in the MurNAc residue.. Its function is as follows. Murein-degrading enzyme that degrades murein glycan strands and insoluble, high-molecular weight murein sacculi, with the concomitant formation of a 1,6-anhydromuramoyl product. Lytic transglycosylases (LTs) play an integral role in the metabolism of the peptidoglycan (PG) sacculus. Their lytic action creates space within the PG sacculus to allow for its expansion as well as for the insertion of various structures such as secretion systems and flagella. The protein is Membrane-bound lytic murein transglycosylase F of Erwinia tasmaniensis (strain DSM 17950 / CFBP 7177 / CIP 109463 / NCPPB 4357 / Et1/99).